The primary structure comprises 449 residues: Kynurenine 3-monooxygenase (449 aa).

It belongs to the aromatic-ring hydroxylase family. KMO subfamily. The cofactor is FAD.

It catalyses the reaction L-kynurenine + NADPH + O2 + H(+) = 3-hydroxy-L-kynurenine + NADP(+) + H2O. It functions in the pathway cofactor biosynthesis; NAD(+) biosynthesis; quinolinate from L-kynurenine: step 1/3. Catalyzes the hydroxylation of L-kynurenine (L-Kyn) to form 3-hydroxy-L-kynurenine (L-3OHKyn). Required for synthesis of quinolinic acid. This is Kynurenine 3-monooxygenase from Legionella pneumophila (strain Lens).